We begin with the raw amino-acid sequence, 250 residues long: Hydroxyacylglutathione hydrolase (250 aa).

Zn(2+) contacts are provided by His52, His54, Asp56, His57, His107, Asp128, and His166.

This sequence belongs to the metallo-beta-lactamase superfamily. Glyoxalase II family. In terms of assembly, monomer. Requires Zn(2+) as cofactor.

The enzyme catalyses an S-(2-hydroxyacyl)glutathione + H2O = a 2-hydroxy carboxylate + glutathione + H(+). Its pathway is secondary metabolite metabolism; methylglyoxal degradation; (R)-lactate from methylglyoxal: step 2/2. In terms of biological role, thiolesterase that catalyzes the hydrolysis of S-D-lactoyl-glutathione to form glutathione and D-lactic acid. This chain is Hydroxyacylglutathione hydrolase, found in Neisseria gonorrhoeae (strain ATCC 700825 / FA 1090).